The primary structure comprises 306 residues: Agmatinase (306 aa).

Positions 126, 149, 151, 153, 230, and 232 each coordinate Mn(2+).

Belongs to the arginase family. Agmatinase subfamily. The cofactor is Mn(2+).

It catalyses the reaction agmatine + H2O = urea + putrescine. It functions in the pathway amine and polyamine biosynthesis; putrescine biosynthesis via agmatine pathway; putrescine from agmatine: step 1/1. Its function is as follows. Catalyzes the formation of putrescine from agmatine. The protein is Agmatinase of Escherichia coli O9:H4 (strain HS).